The chain runs to 1741 residues: DNA-directed RNA polymerase III subunit RPC1 (1741 aa).

Residues Cys79, Cys82, Cys89, His92, Cys119, Cys122, and Cys160 each coordinate Zn(2+). Mg(2+) is bound by residues Asp722, Asp724, and Asp726. Residues 1099-1111 (PFEFLAHARAGRD) are bridging helix. The disordered stretch occupies residues 1719 to 1741 (RHANKRSWSRGKERHASLKPKNR).

This sequence belongs to the RNA polymerase beta' chain family. Component of the RNA polymerase III (Pol III) complex consisting of 17 subunits.

Its subcellular location is the nucleus. The catalysed reaction is RNA(n) + a ribonucleoside 5'-triphosphate = RNA(n+1) + diphosphate. In terms of biological role, DNA-dependent RNA polymerase catalyzes the transcription of DNA into RNA using the four ribonucleoside triphosphates as substrates. Largest and catalytic core component of RNA polymerase III which synthesizes small RNAs, such as 5S rRNA and tRNAs. Forms the polymerase active center together with the second largest subunit. A single-stranded DNA template strand of the promoter is positioned within the central active site cleft of Pol III. A bridging helix emanates from RPC1 and crosses the cleft near the catalytic site and is thought to promote translocation of Pol III by acting as a ratchet that moves the RNA-DNA hybrid through the active site by switching from straight to bent conformations at each step of nucleotide addition. This Giardia intestinalis (Giardia lamblia) protein is DNA-directed RNA polymerase III subunit RPC1 (RPOA3).